We begin with the raw amino-acid sequence, 208 residues long: ATP synthase subunit b (208 aa).

Positions 1–27 (MVKAKKLVFKWSLLVFSFFTLSLFLVS) are cleaved as a signal peptide. The N-palmitoyl cysteine moiety is linked to residue cysteine 28. The S-diacylglycerol cysteine moiety is linked to residue cysteine 28. A helical membrane pass occupies residues 49 to 69 (WVFITHLLAFFILLTLMIFLF).

The protein belongs to the ATPase B chain family. In terms of assembly, F-type ATPases have 2 components, F(1) - the catalytic core - and F(0) - the membrane proton channel. F(1) has five subunits: alpha(3), beta(3), gamma(1), delta(1), epsilon(1). F(0) has three main subunits: a(1), b(2) and c(10-14). The alpha and beta chains form an alternating ring which encloses part of the gamma chain. F(1) is attached to F(0) by a central stalk formed by the gamma and epsilon chains, while a peripheral stalk is formed by the delta and b chains.

Its subcellular location is the cell membrane. In terms of biological role, f(1)F(0) ATP synthase produces ATP from ADP in the presence of a proton or sodium gradient. F-type ATPases consist of two structural domains, F(1) containing the extramembraneous catalytic core and F(0) containing the membrane proton channel, linked together by a central stalk and a peripheral stalk. During catalysis, ATP synthesis in the catalytic domain of F(1) is coupled via a rotary mechanism of the central stalk subunits to proton translocation. Functionally, component of the F(0) channel, it forms part of the peripheral stalk, linking F(1) to F(0). The chain is ATP synthase subunit b from Mycoplasma genitalium (strain ATCC 33530 / DSM 19775 / NCTC 10195 / G37) (Mycoplasmoides genitalium).